A 273-amino-acid polypeptide reads, in one-letter code: Octanoyltransferase LipM (273 aa).

The BPL/LPL catalytic domain occupies 33–244 (GKTPPTLRFY…AFTRLYAVEF (212 aa)). C146 serves as the catalytic Acyl-thioester intermediate.

It belongs to the octanoyltransferase LipM family. In terms of assembly, monomer.

The enzyme catalyses octanoyl-[ACP] + L-lysyl-[protein] = N(6)-octanoyl-L-lysyl-[protein] + holo-[ACP] + H(+). Its pathway is protein modification; protein lipoylation via endogenous pathway; protein N(6)-(lipoyl)lysine from octanoyl-[acyl-carrier-protein]. Its function is as follows. Catalyzes the transfer of endogenously produced octanoic acid from octanoyl-acyl-carrier-protein onto the lipoyl domain of GcvH, an intermediate carrier during protein lipoylation. This chain is Octanoyltransferase LipM, found in Moorella thermoacetica (strain ATCC 39073 / JCM 9320).